The following is a 336-amino-acid chain: Heat-inducible transcription repressor HrcA (336 aa).

This sequence belongs to the HrcA family.

Functionally, negative regulator of class I heat shock genes (grpE-dnaK-dnaJ and groELS operons). Prevents heat-shock induction of these operons. This chain is Heat-inducible transcription repressor HrcA, found in Variovorax paradoxus (strain S110).